A 365-amino-acid chain; its full sequence is DNA replication and repair protein RecF (365 aa).

Residue glycine 30–threonine 37 coordinates ATP.

Belongs to the RecF family.

It is found in the cytoplasm. Functionally, the RecF protein is involved in DNA metabolism; it is required for DNA replication and normal SOS inducibility. RecF binds preferentially to single-stranded, linear DNA. It also seems to bind ATP. The polypeptide is DNA replication and repair protein RecF (Desulfitobacterium hafniense (strain DSM 10664 / DCB-2)).